The sequence spans 210 residues: Large ribosomal subunit protein uL4 (210 aa).

The segment covering 41–52 has biased composition (polar residues); it reads QTNARQGTASTK. The tract at residues 41 to 71 is disordered; it reads QTNARQGTASTKTRAEVRGGGRKPWRQKGTG. Residues 60-71 are compositionally biased toward basic residues; sequence GGRKPWRQKGTG.

Belongs to the universal ribosomal protein uL4 family. Part of the 50S ribosomal subunit.

One of the primary rRNA binding proteins, this protein initially binds near the 5'-end of the 23S rRNA. It is important during the early stages of 50S assembly. It makes multiple contacts with different domains of the 23S rRNA in the assembled 50S subunit and ribosome. Its function is as follows. Forms part of the polypeptide exit tunnel. In Nostoc sp. (strain PCC 7120 / SAG 25.82 / UTEX 2576), this protein is Large ribosomal subunit protein uL4.